The following is a 127-amino-acid chain: uncharacterized protein (127 aa).

4 helical membrane passes run 1-21, 32-52, 68-88, and 100-120; these read MYII…YILV, TVAA…LYVF, AFFS…IILV, and ILDN…LVFK.

The protein belongs to the GtrA family.

The protein resides in the cell membrane. This is an uncharacterized protein from Bacillus subtilis (strain 168).